We begin with the raw amino-acid sequence, 188 residues long: Elongation factor P (188 aa).

At K34 the chain carries N6-(3,6-diaminohexanoyl)-5-hydroxylysine.

Belongs to the elongation factor P family. In terms of processing, may be beta-lysylated on the epsilon-amino group of Lys-34 by the combined action of EpmA and EpmB, and then hydroxylated on the C5 position of the same residue by EpmC (if this protein is present). Lysylation is critical for the stimulatory effect of EF-P on peptide-bond formation. The lysylation moiety may extend toward the peptidyltransferase center and stabilize the terminal 3-CCA end of the tRNA. Hydroxylation of the C5 position on Lys-34 may allow additional potential stabilizing hydrogen-bond interactions with the P-tRNA.

Its subcellular location is the cytoplasm. Its pathway is protein biosynthesis; polypeptide chain elongation. Its function is as follows. Involved in peptide bond synthesis. Alleviates ribosome stalling that occurs when 3 or more consecutive Pro residues or the sequence PPG is present in a protein, possibly by augmenting the peptidyl transferase activity of the ribosome. Modification of Lys-34 is required for alleviation. The chain is Elongation factor P from Xanthomonas oryzae pv. oryzae (strain MAFF 311018).